The primary structure comprises 88 residues: Small ribosomal subunit protein bS16c (88 aa).

This sequence belongs to the bacterial ribosomal protein bS16 family.

The protein resides in the plastid. It localises to the chloroplast. The polypeptide is Small ribosomal subunit protein bS16c (Gossypium barbadense (Sea Island cotton)).